Consider the following 227-residue polypeptide: Lipoprotein-releasing system ATP-binding protein LolD (227 aa).

One can recognise an ABC transporter domain in the interval 7–227 (LRLERIGRAY…TLKDGRVVDL (221 aa)). 43 to 50 (APSGAGKS) is an ATP binding site.

Belongs to the ABC transporter superfamily. Lipoprotein translocase (TC 3.A.1.125) family. The complex is composed of two ATP-binding proteins (LolD) and two transmembrane proteins (LolC and LolE).

It is found in the cell inner membrane. In terms of biological role, part of the ABC transporter complex LolCDE involved in the translocation of mature outer membrane-directed lipoproteins, from the inner membrane to the periplasmic chaperone, LolA. Responsible for the formation of the LolA-lipoprotein complex in an ATP-dependent manner. The sequence is that of Lipoprotein-releasing system ATP-binding protein LolD from Brucella abortus biovar 1 (strain 9-941).